A 365-amino-acid chain; its full sequence is Outer capsid protein sigma-3 (365 aa).

Residues 51 to 73 (CMHCLGVVGSLQRKLKHLPHHRC) form a CCHC-type zinc finger.

This sequence belongs to the orthoreovirus sigma-3 protein family. Heterohexamer of three sigma-3 and three Mu-1 proteins. The RNA-binding form is probably a homodimer. Cleaved during virus the endosomal proteolytic disassembly of the outer capsid.

It localises to the virion. Functionally, stimulates translation by blocking the activation of the dsRNA-dependent protein kinase EIF2AK2/PKR, thereby inhibiting the host interferon response. Sigma3 prevents the activation of EIF2AK2 by competing with the kinase for dsRNA-binding. In terms of biological role, the viral outer shell polypeptides, of which sigma-3 is one, impose structural constraints that prevent elongation of nascent transcripts by the RNA-dependent RNA polymerase lambda-3. In Mammalia (T1L), this protein is Outer capsid protein sigma-3 (S4).